The sequence spans 440 residues: Trigger factor (440 aa).

Residues 163–248 enclose the PPIase FKBP-type domain; the sequence is GDILTVDFLG…AKALKRRVAP (86 aa).

This sequence belongs to the FKBP-type PPIase family. Tig subfamily.

It localises to the cytoplasm. The enzyme catalyses [protein]-peptidylproline (omega=180) = [protein]-peptidylproline (omega=0). Its function is as follows. Involved in protein export. Acts as a chaperone by maintaining the newly synthesized protein in an open conformation. Functions as a peptidyl-prolyl cis-trans isomerase. This is Trigger factor from Acidiphilium cryptum (strain JF-5).